A 782-amino-acid polypeptide reads, in one-letter code: uncharacterized protein (782 aa).

Positions 22–50 (CRECHRLKLKCDRVWPCENCKKRGIPNLC) form a DNA-binding region, zn(2)-C6 fungal-type. Disordered stretches follow at residues 105-126 (GEKP…DPDH) and 645-665 (VPSS…AEKA). Residues 654–665 (SPDDSSMRAEKA) show a composition bias toward basic and acidic residues.

The protein localises to the nucleus. This is an uncharacterized protein from Schizosaccharomyces pombe (strain 972 / ATCC 24843) (Fission yeast).